The primary structure comprises 92 residues: Large ribosomal subunit protein bL27 (92 aa).

Residues M1–F8 constitute a propeptide that is removed on maturation. The disordered stretch occupies residues H11–A30.

It belongs to the bacterial ribosomal protein bL27 family. The N-terminus is cleaved by ribosomal processing cysteine protease Prp.

The sequence is that of Large ribosomal subunit protein bL27 from Lactiplantibacillus plantarum (strain ATCC BAA-793 / NCIMB 8826 / WCFS1) (Lactobacillus plantarum).